The sequence spans 387 residues: Low specificity L-threonine aldolase (387 aa).

An N6-(pyridoxal phosphate)lysine modification is found at Lys213. A Glycyl lysine isopeptide (Lys-Gly) (interchain with G-Cter in ubiquitin) cross-link involves residue Lys228. 2 positions are modified to phosphoserine: Ser367 and Ser369. A Phosphothreonine modification is found at Thr370.

The protein belongs to the threonine aldolase family. In terms of assembly, homotetramer. Pyridoxal 5'-phosphate serves as cofactor.

The catalysed reaction is L-threonine = acetaldehyde + glycine. It catalyses the reaction L-allo-threonine = acetaldehyde + glycine. Its pathway is amino-acid biosynthesis; glycine biosynthesis; glycine from L-allo-threonine: step 1/1. The protein operates within amino-acid degradation; L-threonine degradation via aldolase pathway; acetaldehyde and glycine from L-threonine: step 1/1. Catalyzes the cleavage of L-allo-threonine and L-threonine to glycine and acetaldehyde. The chain is Low specificity L-threonine aldolase (GLY1) from Saccharomyces cerevisiae (strain ATCC 204508 / S288c) (Baker's yeast).